A 794-amino-acid chain; its full sequence is Furin (794 aa).

Positions 1–26 (MELRPWLLWVVAATGTLVLLAADAQG) are cleaved as a signal peptide. Residues 27–107 (QKVFTNTWAV…QQVAKRRTKR (81 aa)) constitute a propeptide, inhibition peptide. The Lumenal segment spans residues 108–715 (DVYQEPTDPK…AGLLPSHLPE (608 aa)). Ca(2+) is bound at residue Asp-115. The Peptidase S8 domain maps to 121–435 (QWYLSGVTQR…YGLLDAGAMV (315 aa)). Asp-153 (charge relay system) is an active-site residue. Asp-154 contacts substrate. Residues Asp-162, Asp-174, Asp-179, and Asp-181 each contribute to the Ca(2+) site. Positions 162–183 (DLAGNYDPGASFDVNDQDPDPQ) are disordered. Residue 191 to 192 (DN) coordinates substrate. The active-site Charge relay system is the His-194. Residues Val-205, Asn-208, Val-210, and Gly-212 each coordinate Ca(2+). 2 cysteine pairs are disulfide-bonded: Cys-211-Cys-360 and Cys-303-Cys-333. Substrate-binding positions include Glu-236, 253 to 258 (SWGPED), Asp-264, and 292 to 295 (ASGN). A Ca(2+)-binding site is contributed by Asp-258. Residue Asp-301 coordinates Ca(2+). The substrate site is built by Asp-306 and Tyr-308. Residue Glu-331 participates in Ca(2+) binding. Ser-368 functions as the Charge relay system in the catalytic mechanism. Ser-368 is a substrate binding site. Residues Asn-387 and Asn-440 are each glycosylated (N-linked (GlcNAc...) asparagine). Residues 444-576 (VAPQRKCIID…TLVLYGTAPE (133 aa)) enclose the P/Homo B domain. Cys-450 and Cys-474 form a disulfide bridge. The short motif at 498-500 (RGD) is the Cell attachment site element. Asn-553 carries N-linked (GlcNAc...) asparagine glycosylation. FU repeat units lie at residues 577 to 620 (GLPV…GFAP) and 638 to 681 (ASVC…QSQS). Residues 673–696 (QTCSRQSQSSRESPPQQQPPRLPP) form a disordered region. A compositionally biased stretch (low complexity) spans 676–687 (SRQSQSSRESPP). A helical membrane pass occupies residues 716 to 738 (VVAGLSCAFIVLVFVTVFLVLQL). Residues 739 to 794 (RSGFSFRGVKVYTMDRGLISYKGLPPEAWQEECPSDSEEDEGRGERTAFIKDQSAL) lie on the Cytoplasmic side of the membrane. Residues 759–762 (YKGL) are cell surface signal. Over residues 767 to 780 (WQEECPSDSEEDEG) the composition is skewed to acidic residues. The interval 767-794 (WQEECPSDSEEDEGRGERTAFIKDQSAL) is disordered. Ser-773 and Ser-775 each carry phosphoserine; by CK2. Residues 773 to 779 (SDSEEDE) carry the Trans Golgi network signal motif.

The protein belongs to the peptidase S8 family. Furin subfamily. Interacts with FLNA. Binds to PACS1 which mediates TGN localization and connection to clathrin adapters. Interacts with LAMP1, LAMP2 and LAMP3. Requires Ca(2+) as cofactor. Post-translationally, the inhibition peptide, which plays the role of an intramolecular chaperone, is autocatalytically removed in the endoplasmic reticulum (ER) and remains non-covalently bound to furin as a potent autoinhibitor. Following transport to the trans Golgi, a second cleavage within the inhibition propeptide results in propeptide dissociation and furin activation. Phosphorylation is required for TGN localization of the endoprotease. In vivo, exists as di-, mono- and non-phosphorylated forms. In terms of tissue distribution, seems to be expressed ubiquitously.

The protein localises to the golgi apparatus. It is found in the trans-Golgi network membrane. It localises to the cell membrane. Its subcellular location is the secreted. The protein resides in the endosome membrane. The enzyme catalyses Release of mature proteins from their proproteins by cleavage of -Arg-Xaa-Yaa-Arg-|-Zaa- bonds, where Xaa can be any amino acid and Yaa is Arg or Lys. Releases albumin, complement component C3 and von Willebrand factor from their respective precursors.. Inhibited by the not secondly cleaved propeptide. Inhibited by m-guanidinomethyl-phenylacetyl-Arg-Val-Arg-(amidomethyl)-benzamidine (m-guanidinomethyl-Phac-RVR-Amb) and 4-guanidinomethyl-phenylacetyl-Arg-Tle-Arg-4-amidinobenzylamide (MI-1148). Inhibited by Decanoyl-Arg-Val-Lys-Arg-chloromethylketone (decanoyl-RVKR-CMK). Inhibited by heparin/heparan sulfate-binding. Functionally, ubiquitous endoprotease within constitutive secretory pathways capable of cleavage at the RX(K/R)R consensus motif. Mediates processing of TGFB1, an essential step in TGF-beta-1 activation. Converts through proteolytic cleavage the non-functional Brain natriuretic factor prohormone into its active hormone BNP(1-32). By mediating processing of accessory subunit ATP6AP1/Ac45 of the V-ATPase, regulates the acidification of dense-core secretory granules in islets of Langerhans cells. (Microbial infection) Cleaves and activates diphtheria toxin DT. In terms of biological role, (Microbial infection) Cleaves and activates anthrax toxin protective antigen (PA). Its function is as follows. (Microbial infection) Cleaves and activates HIV-1 virus Envelope glycoprotein gp160. Functionally, (Microbial infection) Required for H7N1 and H5N1 influenza virus infection probably by cleaving hemagglutinin. (Microbial infection) Able to cleave S.pneumoniae serine-rich repeat protein PsrP. In terms of biological role, (Microbial infection) Facilitates human coronaviruses EMC and SARS-CoV-2 infections by proteolytically cleaving the spike protein at the monobasic S1/S2 cleavage site. This cleavage is essential for spike protein-mediated cell-cell fusion and entry into human lung cells. Its function is as follows. (Microbial infection) Facilitates mumps virus infection by proteolytically cleaving the viral fusion protein F. This is Furin from Homo sapiens (Human).